The primary structure comprises 62 residues: LECHNQQSSEPPTTTRCSGGETNCYKKRWRDHRGYRTERGCGCPTVKKGIELNCCTTDRCNN.

The tract at residues 1–20 (LECHNQQSSEPPTTTRCSGG) is disordered. 4 disulfides stabilise this stretch: Cys-3/Cys-24, Cys-17/Cys-41, Cys-43/Cys-54, and Cys-55/Cys-60.

The protein belongs to the three-finger toxin family. Short-chain subfamily. Type I alpha-neurotoxin sub-subfamily. Expressed by the venom gland.

The protein resides in the secreted. Functionally, binds to muscle nicotinic acetylcholine receptor (nAChR) and inhibit acetylcholine from binding to the receptor, thereby impairing neuromuscular transmission. The polypeptide is Short neurotoxin 1 (Naja mossambica (Mozambique spitting cobra)).